The primary structure comprises 182 residues: ATP synthase subunit b, chloroplastic (182 aa).

Residues 36-56 (ILLLLLGLMYVLKEFLGSILV) form a helical membrane-spanning segment.

It belongs to the ATPase B chain family. In terms of assembly, F-type ATPases have 2 components, F(1) - the catalytic core - and F(0) - the membrane proton channel. F(1) has five subunits: alpha(3), beta(3), gamma(1), delta(1), epsilon(1). F(0) has four main subunits: a(1), b(1), b'(1) and c(10-14). The alpha and beta chains form an alternating ring which encloses part of the gamma chain. F(1) is attached to F(0) by a central stalk formed by the gamma and epsilon chains, while a peripheral stalk is formed by the delta, b and b' chains.

It is found in the plastid. Its subcellular location is the chloroplast thylakoid membrane. Its function is as follows. F(1)F(0) ATP synthase produces ATP from ADP in the presence of a proton or sodium gradient. F-type ATPases consist of two structural domains, F(1) containing the extramembraneous catalytic core and F(0) containing the membrane proton channel, linked together by a central stalk and a peripheral stalk. During catalysis, ATP synthesis in the catalytic domain of F(1) is coupled via a rotary mechanism of the central stalk subunits to proton translocation. In terms of biological role, component of the F(0) channel, it forms part of the peripheral stalk, linking F(1) to F(0). This is ATP synthase subunit b, chloroplastic from Gracilaria tenuistipitata var. liui (Red alga).